The following is a 190-amino-acid chain: MIGRITGTLIEKLPPTICVDVNGLGYDIEVPMSTLYALPELGARVTLHTHLTVREDAHILYGFATAAERGAFRELIKVSGIGARTALSVLSGLSVSDLAQAITLQESGRLTRVPGIGKKTAERLLLEMRGKLGADIGATAHAVPDSQTDILNALLALGYSDKESQAALKKLPEGTGVSEGIRLALKALVR.

Residues 1 to 64 (MIGRITGTLI…EDAHILYGFA (64 aa)) form a domain I region. A domain II region spans residues 65–137 (TAAERGAFRE…MRGKLGADIG (73 aa)). Residues 137 to 141 (GATAH) are flexible linker. Residues 142-190 (AVPDSQTDILNALLALGYSDKESQAALKKLPEGTGVSEGIRLALKALVR) are domain III.

The protein belongs to the RuvA family. Homotetramer. Forms an RuvA(8)-RuvB(12)-Holliday junction (HJ) complex. HJ DNA is sandwiched between 2 RuvA tetramers; dsDNA enters through RuvA and exits via RuvB. An RuvB hexamer assembles on each DNA strand where it exits the tetramer. Each RuvB hexamer is contacted by two RuvA subunits (via domain III) on 2 adjacent RuvB subunits; this complex drives branch migration. In the full resolvosome a probable DNA-RuvA(4)-RuvB(12)-RuvC(2) complex forms which resolves the HJ.

It localises to the cytoplasm. In terms of biological role, the RuvA-RuvB-RuvC complex processes Holliday junction (HJ) DNA during genetic recombination and DNA repair, while the RuvA-RuvB complex plays an important role in the rescue of blocked DNA replication forks via replication fork reversal (RFR). RuvA specifically binds to HJ cruciform DNA, conferring on it an open structure. The RuvB hexamer acts as an ATP-dependent pump, pulling dsDNA into and through the RuvAB complex. HJ branch migration allows RuvC to scan DNA until it finds its consensus sequence, where it cleaves and resolves the cruciform DNA. In Bordetella petrii (strain ATCC BAA-461 / DSM 12804 / CCUG 43448), this protein is Holliday junction branch migration complex subunit RuvA.